We begin with the raw amino-acid sequence, 298 residues long: Thymidylate synthase (298 aa).

Residues Arg25 and 159–160 (RR) each bind dUMP. Cys179 functions as the Nucleophile in the catalytic mechanism. DUMP contacts are provided by residues 200–203 (RSVD), Asn211, and 241–243 (HLY). Asp203 is a binding site for (6R)-5,10-methylene-5,6,7,8-tetrahydrofolate. A (6R)-5,10-methylene-5,6,7,8-tetrahydrofolate-binding site is contributed by Ala297.

Belongs to the thymidylate synthase family. Bacterial-type ThyA subfamily. Homodimer.

It is found in the cytoplasm. It carries out the reaction dUMP + (6R)-5,10-methylene-5,6,7,8-tetrahydrofolate = 7,8-dihydrofolate + dTMP. The protein operates within pyrimidine metabolism; dTTP biosynthesis. Catalyzes the reductive methylation of 2'-deoxyuridine-5'-monophosphate (dUMP) to 2'-deoxythymidine-5'-monophosphate (dTMP) while utilizing 5,10-methylenetetrahydrofolate (mTHF) as the methyl donor and reductant in the reaction, yielding dihydrofolate (DHF) as a by-product. This enzymatic reaction provides an intracellular de novo source of dTMP, an essential precursor for DNA biosynthesis. The sequence is that of Thymidylate synthase from Cereibacter sphaeroides (strain ATCC 17023 / DSM 158 / JCM 6121 / CCUG 31486 / LMG 2827 / NBRC 12203 / NCIMB 8253 / ATH 2.4.1.) (Rhodobacter sphaeroides).